Here is a 381-residue protein sequence, read N- to C-terminus: Queuine tRNA-ribosyltransferase (381 aa).

The active-site Proton acceptor is the D96. Residues 96–100 (DSGGF), D150, Q193, and G220 each bind substrate. Residues 251–257 (GVGSPDA) form an RNA binding region. The Nucleophile role is filled by D270. An RNA binding; important for wobble base 34 recognition region spans residues 275 to 279 (TRIAR). The Zn(2+) site is built by C308, C310, C313, and H339.

It belongs to the queuine tRNA-ribosyltransferase family. In terms of assembly, homodimer. Within each dimer, one monomer is responsible for RNA recognition and catalysis, while the other monomer binds to the replacement base PreQ1. Zn(2+) serves as cofactor.

The catalysed reaction is 7-aminomethyl-7-carbaguanine + guanosine(34) in tRNA = 7-aminomethyl-7-carbaguanosine(34) in tRNA + guanine. It functions in the pathway tRNA modification; tRNA-queuosine biosynthesis. Functionally, catalyzes the base-exchange of a guanine (G) residue with the queuine precursor 7-aminomethyl-7-deazaguanine (PreQ1) at position 34 (anticodon wobble position) in tRNAs with GU(N) anticodons (tRNA-Asp, -Asn, -His and -Tyr). Catalysis occurs through a double-displacement mechanism. The nucleophile active site attacks the C1' of nucleotide 34 to detach the guanine base from the RNA, forming a covalent enzyme-RNA intermediate. The proton acceptor active site deprotonates the incoming PreQ1, allowing a nucleophilic attack on the C1' of the ribose to form the product. After dissociation, two additional enzymatic reactions on the tRNA convert PreQ1 to queuine (Q), resulting in the hypermodified nucleoside queuosine (7-(((4,5-cis-dihydroxy-2-cyclopenten-1-yl)amino)methyl)-7-deazaguanosine). This chain is Queuine tRNA-ribosyltransferase, found in Bacillus velezensis (strain DSM 23117 / BGSC 10A6 / LMG 26770 / FZB42) (Bacillus amyloliquefaciens subsp. plantarum).